Here is a 95-residue protein sequence, read N- to C-terminus: Large ribosomal subunit protein eL31 (95 aa).

This sequence belongs to the eukaryotic ribosomal protein eL31 family.

In Pyrococcus horikoshii (strain ATCC 700860 / DSM 12428 / JCM 9974 / NBRC 100139 / OT-3), this protein is Large ribosomal subunit protein eL31 (rpl31e).